The sequence spans 371 residues: Putative glutamate--cysteine ligase 2 (371 aa).

The protein belongs to the glutamate--cysteine ligase type 2 family. YbdK subfamily.

The catalysed reaction is L-cysteine + L-glutamate + ATP = gamma-L-glutamyl-L-cysteine + ADP + phosphate + H(+). Functionally, ATP-dependent carboxylate-amine ligase which exhibits weak glutamate--cysteine ligase activity. This chain is Putative glutamate--cysteine ligase 2, found in Burkholderia multivorans (strain ATCC 17616 / 249).